Consider the following 262-residue polypeptide: Eukaryotic translation initiation factor 3 subunit G (262 aa).

Positions 182–260 constitute an RRM domain; sequence NTCRVTNLPQ…MVLKVEWTRP (79 aa).

The protein belongs to the eIF-3 subunit G family. As to quaternary structure, component of the eukaryotic translation initiation factor 3 (eIF-3) complex.

It localises to the cytoplasm. In terms of biological role, RNA-binding component of the eukaryotic translation initiation factor 3 (eIF-3) complex, which is involved in protein synthesis of a specialized repertoire of mRNAs and, together with other initiation factors, stimulates binding of mRNA and methionyl-tRNAi to the 40S ribosome. The eIF-3 complex specifically targets and initiates translation of a subset of mRNAs involved in cell proliferation. This subunit can bind 18S rRNA. Binds to GC-rich 5'UTRs in cholinergic motor neurons, thereby may play a role in translational regulation of mRNAs involved in neuropeptide signaling and stress response, including hlh-30 isoform d and ncs-2. In Caenorhabditis elegans, this protein is Eukaryotic translation initiation factor 3 subunit G.